The chain runs to 70 residues: Large ribosomal subunit protein bL31 (70 aa).

Zn(2+)-binding residues include Cys16, Cys18, Cys38, and Cys41.

This sequence belongs to the bacterial ribosomal protein bL31 family. Type A subfamily. In terms of assembly, part of the 50S ribosomal subunit. The cofactor is Zn(2+).

Functionally, binds the 23S rRNA. In Mycolicibacterium gilvum (strain PYR-GCK) (Mycobacterium gilvum (strain PYR-GCK)), this protein is Large ribosomal subunit protein bL31.